A 225-amino-acid chain; its full sequence is Glutathione S-transferase U2 (225 aa).

A GST N-terminal domain is found at 6–85 (ESVKLLGFWI…YIDQTWNNNP (80 aa)). Residues 16 to 17 (SP), 42 to 43 (KK), 56 to 57 (KV), and 69 to 70 (ES) each bind glutathione. The region spanning 90 to 217 (DPYEKAMVRF…EKHIERMKKI (128 aa)) is the GST C-terminal domain. Thr-151 is modified (phosphothreonine).

Belongs to the GST superfamily. Tau family.

It localises to the cytoplasm. Its subcellular location is the cytosol. The enzyme catalyses RX + glutathione = an S-substituted glutathione + a halide anion + H(+). Its function is as follows. May be involved in the conjugation of reduced glutathione to a wide number of exogenous and endogenous hydrophobic electrophiles and have a detoxification role against certain herbicides. This is Glutathione S-transferase U2 (GSTU2) from Arabidopsis thaliana (Mouse-ear cress).